The primary structure comprises 160 residues: NADH-quinone oxidoreductase subunit B (160 aa).

Residues Cys-39, Cys-40, Cys-104, and Cys-135 each contribute to the [4Fe-4S] cluster site.

It belongs to the complex I 20 kDa subunit family. NDH-1 is composed of 14 different subunits. Subunits NuoB, C, D, E, F, and G constitute the peripheral sector of the complex. It depends on [4Fe-4S] cluster as a cofactor.

Its subcellular location is the cell membrane. It catalyses the reaction a quinone + NADH + 5 H(+)(in) = a quinol + NAD(+) + 4 H(+)(out). NDH-1 shuttles electrons from NADH, via FMN and iron-sulfur (Fe-S) centers, to quinones in the respiratory chain. The immediate electron acceptor for the enzyme in this species is believed to be a menaquinone. Couples the redox reaction to proton translocation (for every two electrons transferred, four hydrogen ions are translocated across the cytoplasmic membrane), and thus conserves the redox energy in a proton gradient. The protein is NADH-quinone oxidoreductase subunit B of Amoebophilus asiaticus (strain 5a2).